The primary structure comprises 485 residues: Glutamate mutase epsilon subunit (485 aa).

Residue Arg-66 participates in L-glutamate binding. Gly-68 lines the adenosylcob(III)alamin pocket. Arg-100 lines the L-glutamate pocket. Asn-123 provides a ligand contact to adenosylcob(III)alamin. L-glutamate contacts are provided by residues 149-150 (RH), Glu-171, and Tyr-177. Position 180 (Pro-180) interacts with adenosylcob(III)alamin. Tyr-181 contacts L-glutamate. 4 residues coordinate adenosylcob(III)alamin: Phe-297, Lys-326, Glu-330, and Ile-334.

The protein belongs to the methylaspartate mutase GlmE subunit family. Heterotetramer composed of 2 epsilon subunits (GlmE) and 2 sigma subunits (GlmS). GlmE exists as a homodimer and GlmS as a monomer. The cofactor is adenosylcob(III)alamin.

The enzyme catalyses (2S,3S)-3-methyl-L-aspartate = L-glutamate. It functions in the pathway amino-acid degradation; L-glutamate degradation via mesaconate pathway; acetate and pyruvate from L-glutamate: step 1/4. Its function is as follows. Catalyzes the carbon skeleton rearrangement of L-glutamate to L-threo-3-methylaspartate ((2S,3S)-3-methylaspartate). This is Glutamate mutase epsilon subunit from Treponema denticola (strain ATCC 35405 / DSM 14222 / CIP 103919 / JCM 8153 / KCTC 15104).